The sequence spans 412 residues: Short-chain specific acyl-CoA dehydrogenase, mitochondrial (412 aa).

Residues 1–24 constitute a mitochondrion transit peptide; that stretch reads MAAALLARAGGSLGRALRARDWRR. Thr27 is subject to Phosphothreonine. Residue Lys51 is modified to N6-acetyllysine; alternate. At Lys51 the chain carries N6-succinyllysine; alternate. Lys72 carries the N6-acetyllysine modification. The residue at position 129 (Lys129) is an N6-acetyllysine; alternate. At Lys129 the chain carries N6-succinyllysine; alternate. Residues 152-161 and 185-187 contribute to the FAD site; these read FALSEPGNGS and WIT. Ser161 contacts substrate. Lys208 is subject to N6-acetyllysine. Lys262 bears the N6-acetyllysine; alternate mark. Lys262 bears the N6-succinyllysine; alternate mark. 269–272 lines the substrate pocket; sequence DMGR. At Lys292 the chain carries N6-acetyllysine. Position 297 (Arg297) interacts with FAD. At Lys306 the chain carries N6-acetyllysine; alternate. Lys306 is subject to N6-succinyllysine; alternate. 365–369 contributes to the FAD binding site; that stretch reads QILGG. Residue Glu392 is the Proton acceptor of the active site. 394–396 is an FAD binding site; that stretch reads TSE.

It belongs to the acyl-CoA dehydrogenase family. As to quaternary structure, homotetramer. The cofactor is FAD.

The protein resides in the mitochondrion matrix. It carries out the reaction a short-chain 2,3-saturated fatty acyl-CoA + oxidized [electron-transfer flavoprotein] + H(+) = a short-chain (2E)-enoyl-CoA + reduced [electron-transfer flavoprotein]. It catalyses the reaction butanoyl-CoA + oxidized [electron-transfer flavoprotein] + H(+) = (2E)-butenoyl-CoA + reduced [electron-transfer flavoprotein]. The catalysed reaction is pentanoyl-CoA + oxidized [electron-transfer flavoprotein] + H(+) = (2E)-pentenoyl-CoA + reduced [electron-transfer flavoprotein]. The enzyme catalyses hexanoyl-CoA + oxidized [electron-transfer flavoprotein] + H(+) = (2E)-hexenoyl-CoA + reduced [electron-transfer flavoprotein]. The protein operates within lipid metabolism; mitochondrial fatty acid beta-oxidation. Its function is as follows. Short-chain specific acyl-CoA dehydrogenase is one of the acyl-CoA dehydrogenases that catalyze the first step of mitochondrial fatty acid beta-oxidation, an aerobic process breaking down fatty acids into acetyl-CoA and allowing the production of energy from fats. The first step of fatty acid beta-oxidation consists in the removal of one hydrogen from C-2 and C-3 of the straight-chain fatty acyl-CoA thioester, resulting in the formation of trans-2-enoyl-CoA. Among the different mitochondrial acyl-CoA dehydrogenases, short-chain specific acyl-CoA dehydrogenase acts specifically on acyl-CoAs with saturated 4 to 6 carbons long primary chains. This is Short-chain specific acyl-CoA dehydrogenase, mitochondrial (Acads) from Rattus norvegicus (Rat).